The chain runs to 434 residues: UPF0597 protein CLK_1462 (434 aa).

This sequence belongs to the UPF0597 family.

The protein is UPF0597 protein CLK_1462 of Clostridium botulinum (strain Loch Maree / Type A3).